The primary structure comprises 244 residues: 3-oxoacyl-[acyl-carrier-protein] reductase FabG (244 aa).

NADP(+) contacts are provided by residues 12–15 (GANQ) and Thr-37. Residues Lys-50 and Gly-53 each contribute to the Ca(2+) site. Residues 59–60 (DL) and Asn-86 each bind NADP(+). Ser-138 provides a ligand contact to substrate. Asn-145 is a Ca(2+) binding site. Tyr-151 serves as the catalytic Proton acceptor. NADP(+) is bound by residues 151–155 (YSASK) and Ile-184. Ca(2+) is bound by residues Gln-233 and Thr-234.

Belongs to the short-chain dehydrogenases/reductases (SDR) family. Homotetramer.

The catalysed reaction is a (3R)-hydroxyacyl-[ACP] + NADP(+) = a 3-oxoacyl-[ACP] + NADPH + H(+). It functions in the pathway lipid metabolism; fatty acid biosynthesis. Catalyzes the NADPH-dependent reduction of beta-ketoacyl-ACP substrates to beta-hydroxyacyl-ACP products, the first reductive step in the elongation cycle of fatty acid biosynthesis. The chain is 3-oxoacyl-[acyl-carrier-protein] reductase FabG (fabG) from Buchnera aphidicola subsp. Schizaphis graminum (strain Sg).